Reading from the N-terminus, the 276-residue chain is Glutamate racemase (276 aa).

Residues Asp-10–Ser-11 and Tyr-42–Gly-43 each bind substrate. The Proton donor/acceptor role is filled by Cys-74. Asn-75–Thr-76 is a substrate binding site. Cys-185 functions as the Proton donor/acceptor in the catalytic mechanism. Position 186–187 (Thr-186–His-187) interacts with substrate.

It belongs to the aspartate/glutamate racemases family.

The catalysed reaction is L-glutamate = D-glutamate. Its pathway is cell wall biogenesis; peptidoglycan biosynthesis. Functionally, provides the (R)-glutamate required for cell wall biosynthesis. In Levilactobacillus brevis (strain ATCC 367 / BCRC 12310 / CIP 105137 / JCM 1170 / LMG 11437 / NCIMB 947 / NCTC 947) (Lactobacillus brevis), this protein is Glutamate racemase.